Reading from the N-terminus, the 79-residue chain is Large ribosomal subunit protein uL29 (79 aa).

The protein belongs to the universal ribosomal protein uL29 family.

The chain is Large ribosomal subunit protein uL29 from Tropheryma whipplei (strain Twist) (Whipple's bacillus).